We begin with the raw amino-acid sequence, 119 residues long: Ribosome-binding factor A (119 aa).

The protein belongs to the RbfA family. As to quaternary structure, monomer. Binds 30S ribosomal subunits, but not 50S ribosomal subunits or 70S ribosomes.

It localises to the cytoplasm. In terms of biological role, one of several proteins that assist in the late maturation steps of the functional core of the 30S ribosomal subunit. Associates with free 30S ribosomal subunits (but not with 30S subunits that are part of 70S ribosomes or polysomes). Required for efficient processing of 16S rRNA. May interact with the 5'-terminal helix region of 16S rRNA. This is Ribosome-binding factor A from Limosilactobacillus reuteri (strain DSM 20016) (Lactobacillus reuteri).